The sequence spans 481 residues: Solute carrier family 46 member 2 (481 aa).

Over 1-37 (MGPEAAGPGRGAAPRLQVRTWIEPVVAATQVASSLYE) the chain is Cytoplasmic. A helical membrane pass occupies residues 38-58 (AGLLLVVKASFGAGAGAGAGA). The Extracellular segment spans residues 59–83 (ASNHSAGPPRGAPEDQQQRAISNFY). An N-linked (GlcNAc...) asparagine glycan is attached at Asn-61. The helical transmembrane segment at 84-104 (IVYNLVVGLTPLLSAYALGWL) threads the bilayer. The Cytoplasmic segment spans residues 105–113 (SDRRHRKVA). A helical membrane pass occupies residues 114 to 134 (ICVALLGFLLSRVGLLLKVLL). At 135–143 (DWPVEVLYG) the chain is on the extracellular side. Residues 144–164 (AAALNGLCGGFSAFWAGVMAL) form a helical membrane-spanning segment. Over 165–179 (GSLGSSEGRRSVRLV) the chain is Cytoplasmic. Residues 180-200 (LIDLILGLAGFCGSMASGHLF) form a helical membrane-spanning segment. The Extracellular segment spans residues 201 to 210 (KQVAGHSGQG). A helical transmembrane segment spans residues 211–231 (LVLTACSVSCATFALLYSLLV). Topologically, residues 232–286 (LKVPEAAAGSGQALSAGDSVAGTVGTYRTLDPDHSDKQSVQGLHPPSPGKAKPRR) are cytoplasmic. The interval 263–282 (PDHSDKQSVQGLHPPSPGKA) is disordered. Residues 287–307 (TIIALLFLGAIVYDLAVVGTV) traverse the membrane as a helical segment. Over 308–326 (DVMPLFVLREPLSWNQVQV) the chain is Extracellular. A helical transmembrane segment spans residues 327 to 347 (GYGMAAGYTIFITSFLGVLVF). Residues 348–353 (SRCFQD) lie on the Cytoplasmic side of the membrane. The chain crosses the membrane as a helical span at residues 354 to 374 (TTMIMIGMVSFGSGALLLAFV). Over 375 to 376 (KE) the chain is Extracellular. Residues 377 to 397 (TYMFYIARAVMLFALIPITTI) traverse the membrane as a helical segment. Residues 398–412 (RSAMSKLIKGSSYGK) are Cytoplasmic-facing. The chain crosses the membrane as a helical span at residues 413–433 (VFVILQLSLTLTGVVTSTVYN). Residues 434–446 (KIYQVTMEKFIGT) are Extracellular-facing. The chain crosses the membrane as a helical span at residues 447–467 (CFALSSFLSFLAIIPIGIVAY). Residues 468–481 (KQASWLQYGDVRET) are Cytoplasmic-facing.

Belongs to the major facilitator superfamily. SLC46A family. Post-translationally, glycosylated. As to expression, highly expressed by the epididymal duct epithelium.

The protein resides in the endosome membrane. It is found in the cell membrane. It catalyses the reaction N-acetyl-beta-D-glucosaminyl-(1-&gt;4)-1,6-anhydro-N-acetyl-beta-D-muramoyl-L-alanyl-gamma-D-glutamyl-meso-2,6-diaminopimeloyl-D-alanine(out) + n H(+)(out) = N-acetyl-beta-D-glucosaminyl-(1-&gt;4)-1,6-anhydro-N-acetyl-beta-D-muramoyl-L-alanyl-gamma-D-glutamyl-meso-2,6-diaminopimeloyl-D-alanine(in) + n H(+)(in). The catalysed reaction is L-alanyl-gamma-D-glutamyl-meso-2,6-diaminopimelate(out) + n H(+)(out) = L-alanyl-gamma-D-glutamyl-meso-2,6-diaminopimelate(in) + n H(+)(in). It carries out the reaction N-acetyl-D-muramoyl-L-alanyl-D-isoglutamine(out) + n H(+)(out) = N-acetyl-D-muramoyl-L-alanyl-D-isoglutamine(in) + n H(+)(in). The enzyme catalyses 2',3'-cGAMP(out) + n H(+)(out) = 2',3'-cGAMP(in) + n H(+)(in). It catalyses the reaction 3',3'-cGAMP(out) + n H(+)(out) = 3',3'-cGAMP(in) + n H(+)(in). Functionally, proton-coupled transporter that delivers pathogen-associated or danger-associated molecular patterns to cytosolic pattern recognition receptors as part of the innate immune response to microbes or tissue injury. Has selectivity toward muropeptides that contain the amino acid diaminopimelic acid (DAP-type peptidoglycan muropeptides) including Tri-DAP and tracheal toxin (TCT), common in Gram-negative bacteria and Gram-positive bacilli. In the context of immune recognition of skin microbiota, shuttles bacterial muropeptides across the endolysosomal membranes into the cytosol for recognition by NOD1, triggering MYD88-dependent secretion of IL1A and neutrophil recruitment in a pyroptosis-type inflammatory process. To a lesser extent and redundantly, transports muramyl dipeptides derived from most bacterial proteoglycans, eliciting NOD2 receptor activation and downstream inflammatory responses. Postulated to function as an importer of cyclic GMP-AMP dinucleotides (cGAMPs) in monocyte and macrophage cell lineages. Selectively imports cGAMPs derived from pathogenic bacteria such as 3'3'-cGAMP thus providing for differential immune recognition of pathogenic versus commensal bacteria. During tumorigenesis may transport extracellular tumor-derived 2'3'-cGAMP across the plasma membrane of M1-polarized macrophages to activate the anti-tumoral stimulator of interferon genes (STING) pathway. The transport mechanism, its electrogenicity and stoichiometry remain to be elucidated. In Canis lupus familiaris (Dog), this protein is Solute carrier family 46 member 2.